Here is a 263-residue protein sequence, read N- to C-terminus: Trans-aconitate 2-methyltransferase (263 aa).

The protein belongs to the methyltransferase superfamily. Tam family.

The protein localises to the cytoplasm. It carries out the reaction trans-aconitate + S-adenosyl-L-methionine = (E)-3-(methoxycarbonyl)pent-2-enedioate + S-adenosyl-L-homocysteine. In terms of biological role, catalyzes the S-adenosylmethionine monomethyl esterification of trans-aconitate. This chain is Trans-aconitate 2-methyltransferase, found in Mycobacterium marinum (strain ATCC BAA-535 / M).